The following is a 499-amino-acid chain: Putative antiporter subunit mnhD2 (499 aa).

14 helical membrane-spanning segments follow: residues 1–21 (MSNL…ILVF), 31–51 (ILSI…LIYV), 77–97 (LSLL…AYGF), 107–127 (FHLP…FLTS), 129–149 (LFNL…LVTL), 160–180 (IVYV…IGML), 208–228 (ISLV…FMWL), 239–259 (LAAL…IRFF), 272–292 (TLLV…VIAY), 307–327 (IGFI…GAIF), 329–349 (LAND…LVYM), 367–387 (FFGV…PFSG), 402–422 (GNYI…YSLF), and 449–469 (GLLS…PVVL).

The protein belongs to the CPA3 antiporters (TC 2.A.63) subunit D family. As to quaternary structure, may form a heterooligomeric complex that consists of seven subunits: mnhA2, mnhB2, mnhC2, mnhD2, mnhE2, mnhF2 and mnhG2.

It localises to the cell membrane. This Staphylococcus epidermidis (strain ATCC 35984 / DSM 28319 / BCRC 17069 / CCUG 31568 / BM 3577 / RP62A) protein is Putative antiporter subunit mnhD2 (mnhD2).